A 740-amino-acid chain; its full sequence is Vertnin (740 aa).

3 disordered regions span residues 485–506 (EAGE…RGLI), 560–616 (PGMQ…DQNV), and 653–673 (TQSQ…APGG). Basic and acidic residues predominate over residues 578 to 604 (QKPEGRQKPEEQQKPEGRQKPEGRQKP). Polar residues predominate over residues 653-667 (TQSQPHSGSLPSQTL).

Belongs to the vertnin family.

It localises to the nucleus. Its function is as follows. Acts as a transcription factor that regulates development of thoracic vertebrae. The polypeptide is Vertnin (Vrtn) (Mus musculus (Mouse)).